The chain runs to 1206 residues: Phosphoglucan, water dikinase, chloroplastic (1206 aa).

Disordered regions lie at residues 1–20 (MTSLRPLETSLSIGGRPRRG) and 52–71 (RSAASAAERTKEKKRRDSSK). Residues 1–56 (MTSLRPLETSLSIGGRPRRGLVLPPPGVGAGVLLRRGAMALPGRRGFACRGRSAAS) constitute a chloroplast transit peptide. A CBM20 domain is found at 67-168 (RDSSKQPLVH…KFDIVCHWNR (102 aa)). The active-site Tele-phosphohistidine intermediate is the histidine 776.

The protein belongs to the PEP-utilizing enzyme family. In terms of assembly, homodimer. Mg(2+) serves as cofactor.

The protein localises to the plastid. The protein resides in the chloroplast. It catalyses the reaction [(1-&gt;4)-6-phospho-alpha-D-glucosyl](n) + n ATP + n H2O = [(1-&gt;4)-3,6-bisphospho-alpha-D-glucosyl](n) + n AMP + n phosphate + 2n H(+). Its function is as follows. Mediates the incorporation of phosphate into starch-like phospho-alpha-glucan, mostly at the C-3 position of glucose units. May be required for starch degradation, suggesting that the phosphate content of starch regulates its degradability. The chain is Phosphoglucan, water dikinase, chloroplastic (GWD3) from Oryza sativa subsp. japonica (Rice).